Here is a 562-residue protein sequence, read N- to C-terminus: Bifunctional coenzyme A synthase (562 aa).

S177 and S182 each carry phosphoserine. Residues 179 to 357 are phosphopantetheine adenylyltransferase; sequence VARSAKQPVR…HKRPELPPGC (179 aa). Positions 359-562 constitute a DPCK domain; that stretch reads VIGLTGISGS…KRISEAPSDP (204 aa). Residue 364 to 371 coordinates ATP; it reads GISGSGKS.

The protein in the central section; belongs to the eukaryotic CoaD family. In terms of assembly, monomer. In terms of processing, the N-terminus is blocked.

The protein localises to the cytoplasm. The protein resides in the mitochondrion matrix. The catalysed reaction is (R)-4'-phosphopantetheine + ATP + H(+) = 3'-dephospho-CoA + diphosphate. It carries out the reaction 3'-dephospho-CoA + ATP = ADP + CoA + H(+). It participates in cofactor biosynthesis; coenzyme A biosynthesis; CoA from (R)-pantothenate: step 4/5. The protein operates within cofactor biosynthesis; coenzyme A biosynthesis; CoA from (R)-pantothenate: step 5/5. Functionally, bifunctional enzyme that catalyzes the fourth and fifth sequential steps of CoA biosynthetic pathway. The fourth reaction is catalyzed by the phosphopantetheine adenylyltransferase, coded by the coaD domain; the fifth reaction is catalyzed by the dephospho-CoA kinase, coded by the coaE domain. May act as a point of CoA biosynthesis regulation. The sequence is that of Bifunctional coenzyme A synthase from Sus scrofa (Pig).